The chain runs to 440 residues: Protein OSB3, chloroplastic/mitochondrial (440 aa).

A chloroplast and mitochondrion-targeting transit peptide spans 1–61 (MNLISRTLTR…AKVSVKPPLN (61 aa)). Positions 80 to 178 (ISNWINLIGF…VMVQNLNFVQ (99 aa)) constitute an SSB domain. PDF region regions lie at residues 218–270 (WKHL…LKLE), 294–342 (WKDL…SKLP), and 380–428 (WKNL…SKLP).

In terms of tissue distribution, expressed primarily in the female gametophyte and in the floral abscission zone.

Its subcellular location is the mitochondrion. The protein localises to the plastid. It localises to the chloroplast. Its function is as follows. Binds single-stranded DNA. The polypeptide is Protein OSB3, chloroplastic/mitochondrial (OSB3) (Arabidopsis thaliana (Mouse-ear cress)).